A 439-amino-acid chain; its full sequence is Ribulose bisphosphate carboxylase/oxygenase activase 2, chloroplastic (439 aa).

The N-terminal 58 residues, Met-1 to Ala-58, are a transit peptide targeting the chloroplast. Position 169 to 176 (Gly-169 to Ser-176) interacts with ATP.

This sequence belongs to the RuBisCO activase family.

Its subcellular location is the plastid. The protein localises to the chloroplast stroma. In terms of biological role, activation of RuBisCO (ribulose-1,5-bisphosphate carboxylase/oxygenase; EC 4.1.1.39) involves the ATP-dependent carboxylation of the epsilon-amino group of lysine leading to a carbamate structure. This Nicotiana tabacum (Common tobacco) protein is Ribulose bisphosphate carboxylase/oxygenase activase 2, chloroplastic (RCA).